The sequence spans 392 residues: Cell division protein DivIB (392 aa).

The segment at 1-88 (MSEKDNNLTP…TQSSEAPIEN (88 aa)) is disordered. The Cytoplasmic portion of the chain corresponds to 1–131 (MSEKDNNLTP…KGSAPLLKKM (131 aa)). The segment covering 14 to 32 (KHLEYQKRKAEEAKKEKKA) has biased composition (basic and acidic residues). A compositionally biased stretch (acidic residues) spans 58–76 (TRDEAESAELLEEGFETNN). Residues 132 to 152 (WPALAVVVLVFVGSLYLISPL) traverse the membrane as a helical segment. Residues 153-224 (SKISTFSVSG…NRFEAIVKEH (72 aa)) enclose the POTRA domain. Topologically, residues 153–392 (SKISTFSVSG…TAQSTTTSSN (240 aa)) are extracellular. A disordered region spans residues 368 to 392 (ISAQNAKKTDASSENTAQSTTTSSN).

The protein belongs to the FtsQ/DivIB family. DivIB subfamily.

Its subcellular location is the cell membrane. In terms of biological role, cell division protein that may be involved in stabilizing or promoting the assembly of the division complex. The chain is Cell division protein DivIB from Lactococcus lactis subsp. lactis (strain KF147).